The primary structure comprises 223 residues: uncharacterized protein (223 aa).

4 consecutive transmembrane segments (helical) span residues 22-42 (LTVG…FVVV), 59-79 (GVAL…ATLI), 85-105 (IFSL…WCSM), and 164-184 (MAWA…SQAF).

This sequence belongs to the Rht family.

It localises to the cell membrane. This is an uncharacterized protein from Escherichia coli (strain K12).